Reading from the N-terminus, the 196-residue chain is MKQIVKRSHAIRIVAALGIIGLWMFFSSNELSIATPGLIKAKSGIDEVQGAAAEKNDARLKEIEKQTIMPLMGDDKVKKEVGRASWKYFHTLLARFPDEPTPEEREKLHTFIGLYAELYPCGECSYHFVKLIEKYPVQTSSRTAAAMWGCHIHNKVNEYLKKDIYDCATILEDYDCGCSDSDGKRVSLEKEAKQHG.

The Cytoplasmic portion of the chain corresponds to 1 to 12 (MKQIVKRSHAIR). A helical; Signal-anchor transmembrane segment spans residues 13-35 (IVAALGIIGLWMFFSSNELSIAT). The Lumenal segment spans residues 36 to 196 (PGLIKAKSGI…SLEKEAKQHG (161 aa)). Residues 72-174 (MGDDKVKKEV…YDCATILEDY (103 aa)) form the ERV/ALR sulfhydryl oxidase domain. Residues lysine 78, arginine 83, and tryptophan 86 each coordinate FAD. An intrachain disulfide couples cysteine 121 to cysteine 124. Residues histidine 127, cysteine 150, histidine 153, asparagine 157, lysine 162, and tyrosine 174 each contribute to the FAD site. Cysteine 150 and cysteine 167 form a disulfide bridge. Cysteine 176 and cysteine 178 form a disulfide bridge.

In terms of assembly, homodimer. Interacts with the substrate protein PDI1, forming transient intermolecular disulfide bridges. FAD is required as a cofactor.

Its subcellular location is the endoplasmic reticulum membrane. It catalyses the reaction 2 R'C(R)SH + O2 = R'C(R)S-S(R)CR' + H2O2. Its function is as follows. FAD-dependent sulfhydryl oxidase that catalyzes disulfide bond formation in the endoplasmic reticulum lumen in parallel to ERO1. This Saccharomyces cerevisiae (strain ATCC 204508 / S288c) (Baker's yeast) protein is FAD-linked sulfhydryl oxidase ERV2 (ERV2).